A 248-amino-acid chain; its full sequence is MEADAPAGYRDPSGRHGAVTLPARPEPIAFDADATVLIVVDMQNAYATKGGYLDLAGFDVSATGPVIERIARAVAAARAAGIRVVWFQNGWDPDYVEAGGPGSPNWHKSNALKTMRRRPEMNQRLLAKGTWDYALVDALTPEPGDIVLPKPRYSGFYNTPLDSMLRARGIRTLVFTGIATNVCVESTLRDGYHREYFGIVLADATHQAGPPALQEGALRNIETFFGWVSDVAAFEAALSSDEARRIPA.

The active-site Proton acceptor is Asp41. Lys150 is a catalytic residue. Catalysis depends on Cys183, which acts as the Nucleophile.

It belongs to the isochorismatase family. RutB subfamily.

It carries out the reaction (Z)-3-ureidoacrylate + H2O + H(+) = (Z)-3-aminoacrylate + NH4(+) + CO2. The enzyme catalyses (Z)-3-ureidoacrylate + H2O = (Z)-3-aminoacrylate + carbamate + H(+). The catalysed reaction is (Z)-2-methylureidoacrylate + H2O + H(+) = (Z)-2-methylaminoacrylate + NH4(+) + CO2. Its function is as follows. Hydrolyzes ureidoacrylate to form aminoacrylate and carbamate. The carbamate hydrolyzes spontaneously, thereby releasing one of the nitrogen atoms of the pyrimidine ring as ammonia and one of its carbon atoms as CO2. The protein is Ureidoacrylate amidohydrolase RutB of Methylorubrum extorquens (strain DSM 6343 / CIP 106787 / DM4) (Methylobacterium extorquens).